Here is a 93-residue protein sequence, read N- to C-terminus: Parbolysin P1 (93 aa).

3 disulfides stabilise this stretch: cysteine 16–cysteine 37, cysteine 22–cysteine 33, and cysteine 47–cysteine 60.

This sequence belongs to the worm cytolysin family. As to expression, localized within the skin and proboscis and are most readily isolated from body mucus secretions.

Its subcellular location is the secreted. Cytolysin that shows hemolytic activity (on bovine erythrocytes, HC(50)=5.75 mg/ml). This hemolytic activity is completely inhibited by small unilamelar vesicles composed of PC/PG, PC/PI and PC/PS in 1:1 molar ratios (with at least 100 mg/ml concentration). The recombinant protein does not show hemolytic activity, suggesting that it is not properly folded or that it requires a free N-terminal end for its activity. The polypeptide is Parbolysin P1 (Parborlasia corrugatus (Antarctic nemertean worm)).